Here is a 204-residue protein sequence, read N- to C-terminus: Superoxide dismutase [Mn] (204 aa).

Residue histidine 27 coordinates Mn(2+). Phosphothreonine is present on residues threonine 34 and threonine 70. Mn(2+)-binding residues include histidine 82, aspartate 164, and histidine 168.

This sequence belongs to the iron/manganese superoxide dismutase family. As to quaternary structure, homodimer. The cofactor is Mn(2+).

It catalyses the reaction 2 superoxide + 2 H(+) = H2O2 + O2. Functionally, destroys superoxide anion radicals which are normally produced within the cells and which are toxic to biological systems. The protein is Superoxide dismutase [Mn] (sodA) of Geobacillus stearothermophilus (Bacillus stearothermophilus).